A 124-amino-acid polypeptide reads, in one-letter code: MATINQLVRKPRSMKVAKSNVPALEACPQKRGVCTRVYTTTPKKPNSALRKVCRVRLTNGFEVTSYIGGEGHNLQEHSVILIRGGRVKDLPGVRYHTVRGALDCSGVKDRKQSRSKYGVKKQKA.

D89 carries the post-translational modification 3-methylthioaspartic acid.

Belongs to the universal ribosomal protein uS12 family. As to quaternary structure, part of the 30S ribosomal subunit. Contacts proteins S8 and S17. May interact with IF1 in the 30S initiation complex.

In terms of biological role, with S4 and S5 plays an important role in translational accuracy. Functionally, interacts with and stabilizes bases of the 16S rRNA that are involved in tRNA selection in the A site and with the mRNA backbone. Located at the interface of the 30S and 50S subunits, it traverses the body of the 30S subunit contacting proteins on the other side and probably holding the rRNA structure together. The combined cluster of proteins S8, S12 and S17 appears to hold together the shoulder and platform of the 30S subunit. This is Small ribosomal subunit protein uS12 from Yersinia pestis (strain Pestoides F).